The following is a 73-amino-acid chain: METQKLVSMVKEALDKYSYPLTAKNIKAVIQKEYKVVLPTGSINSILYSNTELFEKVDKTNTIYPPLWMRKTN.

Belongs to the asfivirus I73R family.

It localises to the virion. This is an uncharacterized protein from Ornithodoros (relapsing fever ticks).